Here is a 455-residue protein sequence, read N- to C-terminus: Oxidative stress induced growth inhibitor homolog osgn-1 (455 aa).

This sequence belongs to the OKL38 family. Requires NADPH as cofactor.

It localises to the midbody. Its function is as follows. Monooxygenase catalytic activity. Involved in regulation of cytokinesis; promotes rho-1/RhoA activity, probably acting locally at the midbody in late cytokinesis. Monooxygenase activity is required to stabilize structures between primordial germ cells (PGCs), termed intercellular bridges. Dispensable for fertility. The protein is Oxidative stress induced growth inhibitor homolog osgn-1 of Caenorhabditis elegans.